The primary structure comprises 261 residues: Pantothenate synthetase (261 aa).

Residue 29–36 (MGALHNGH) participates in ATP binding. His36 serves as the catalytic Proton donor. Position 60 (Gln60) interacts with (R)-pantoate. Position 60 (Gln60) interacts with beta-alanine. Position 147–150 (147–150 (GEKD)) interacts with ATP. Gln153 provides a ligand contact to (R)-pantoate. Residue 184 to 187 (LSSR) coordinates ATP.

Belongs to the pantothenate synthetase family. In terms of assembly, homodimer.

The protein resides in the cytoplasm. The enzyme catalyses (R)-pantoate + beta-alanine + ATP = (R)-pantothenate + AMP + diphosphate + H(+). It functions in the pathway cofactor biosynthesis; (R)-pantothenate biosynthesis; (R)-pantothenate from (R)-pantoate and beta-alanine: step 1/1. Its function is as follows. Catalyzes the condensation of pantoate with beta-alanine in an ATP-dependent reaction via a pantoyl-adenylate intermediate. The protein is Pantothenate synthetase of Francisella tularensis subsp. holarctica (strain FTNF002-00 / FTA).